A 225-amino-acid chain; its full sequence is Ribonuclease 3 (225 aa).

The RNase III domain occupies 7 to 129 (IPRLCRTLGY…IIGAIYLDSE (123 aa)). A Mg(2+)-binding site is contributed by glutamate 42. Aspartate 46 is a catalytic residue. Residues aspartate 115 and glutamate 118 each contribute to the Mg(2+) site. Glutamate 118 is a catalytic residue. The DRBM domain occupies 155-225 (DPKTLLQEHL…AAQVLELMKK (71 aa)).

This sequence belongs to the ribonuclease III family. Homodimer. It depends on Mg(2+) as a cofactor.

Its subcellular location is the cytoplasm. The enzyme catalyses Endonucleolytic cleavage to 5'-phosphomonoester.. Digests double-stranded RNA. Involved in the processing of primary rRNA transcript to yield the immediate precursors to the large and small rRNAs (23S and 16S). Processes some mRNAs, and tRNAs when they are encoded in the rRNA operon. Processes pre-crRNA and tracrRNA of type II CRISPR loci if present in the organism. In Shewanella halifaxensis (strain HAW-EB4), this protein is Ribonuclease 3.